Here is a 582-residue protein sequence, read N- to C-terminus: Arginine--tRNA ligase (582 aa).

The short motif at 127-137 is the 'HIGH' region element; the sequence is PNLAKEMHVGH.

This sequence belongs to the class-I aminoacyl-tRNA synthetase family. As to quaternary structure, monomer.

Its subcellular location is the cytoplasm. It catalyses the reaction tRNA(Arg) + L-arginine + ATP = L-arginyl-tRNA(Arg) + AMP + diphosphate. This Psychromonas ingrahamii (strain DSM 17664 / CCUG 51855 / 37) protein is Arginine--tRNA ligase.